Consider the following 279-residue polypeptide: Large ribosomal subunit protein uL2 (279 aa).

The segment at Val-223–Arg-279 is disordered. Residues Val-270–Arg-279 show a composition bias toward basic residues.

Belongs to the universal ribosomal protein uL2 family. Part of the 50S ribosomal subunit. Forms a bridge to the 30S subunit in the 70S ribosome.

In terms of biological role, one of the primary rRNA binding proteins. Required for association of the 30S and 50S subunits to form the 70S ribosome, for tRNA binding and peptide bond formation. It has been suggested to have peptidyltransferase activity; this is somewhat controversial. Makes several contacts with the 16S rRNA in the 70S ribosome. This is Large ribosomal subunit protein uL2 from Leptospira borgpetersenii serovar Hardjo-bovis (strain JB197).